Consider the following 337-residue polypeptide: tRNA N6-adenosine threonylcarbamoyltransferase (337 aa).

The Fe cation site is built by His111 and His115. Residues 134-138, Asp167, Gly180, and Asn272 contribute to the substrate site; that span reads LVSGG. Asp300 contacts Fe cation.

Belongs to the KAE1 / TsaD family. The cofactor is Fe(2+).

The protein resides in the cytoplasm. The enzyme catalyses L-threonylcarbamoyladenylate + adenosine(37) in tRNA = N(6)-L-threonylcarbamoyladenosine(37) in tRNA + AMP + H(+). Functionally, required for the formation of a threonylcarbamoyl group on adenosine at position 37 (t(6)A37) in tRNAs that read codons beginning with adenine. Is involved in the transfer of the threonylcarbamoyl moiety of threonylcarbamoyl-AMP (TC-AMP) to the N6 group of A37, together with TsaE and TsaB. TsaD likely plays a direct catalytic role in this reaction. This is tRNA N6-adenosine threonylcarbamoyltransferase from Salmonella typhi.